The chain runs to 481 residues: N-succinylglutamate 5-semialdehyde dehydrogenase (481 aa).

Position 206 to 211 (206 to 211 (GSARTG)) interacts with NAD(+). Catalysis depends on residues glutamate 229 and cysteine 263.

The protein belongs to the aldehyde dehydrogenase family. AstD subfamily.

The catalysed reaction is N-succinyl-L-glutamate 5-semialdehyde + NAD(+) + H2O = N-succinyl-L-glutamate + NADH + 2 H(+). It participates in amino-acid degradation; L-arginine degradation via AST pathway; L-glutamate and succinate from L-arginine: step 4/5. Catalyzes the NAD-dependent reduction of succinylglutamate semialdehyde into succinylglutamate. The sequence is that of N-succinylglutamate 5-semialdehyde dehydrogenase from Sphingopyxis alaskensis (strain DSM 13593 / LMG 18877 / RB2256) (Sphingomonas alaskensis).